Consider the following 101-residue polypeptide: Chaperone modulatory protein CbpM (101 aa).

It belongs to the CbpM family.

In terms of biological role, interacts with CbpA and inhibits both the DnaJ-like co-chaperone activity and the DNA binding activity of CbpA. Together with CbpA, modulates the activity of the DnaK chaperone system. Does not inhibit the co-chaperone activity of DnaJ. This chain is Chaperone modulatory protein CbpM, found in Pseudomonas putida (strain GB-1).